Reading from the N-terminus, the 400-residue chain is CCA-adding enzyme (400 aa).

ATP is bound by residues glycine 28 and arginine 31. Positions 28 and 31 each coordinate CTP. Mg(2+) is bound by residues aspartate 41 and aspartate 43. ATP contacts are provided by arginine 112, aspartate 155, arginine 158, arginine 161, and arginine 164. The CTP site is built by arginine 112, aspartate 155, arginine 158, arginine 161, and arginine 164.

This sequence belongs to the tRNA nucleotidyltransferase/poly(A) polymerase family. Bacterial CCA-adding enzyme type 3 subfamily. As to quaternary structure, homodimer. It depends on Mg(2+) as a cofactor.

The catalysed reaction is a tRNA precursor + 2 CTP + ATP = a tRNA with a 3' CCA end + 3 diphosphate. It catalyses the reaction a tRNA with a 3' CCA end + 2 CTP + ATP = a tRNA with a 3' CCACCA end + 3 diphosphate. Functionally, catalyzes the addition and repair of the essential 3'-terminal CCA sequence in tRNAs without using a nucleic acid template. Adds these three nucleotides in the order of C, C, and A to the tRNA nucleotide-73, using CTP and ATP as substrates and producing inorganic pyrophosphate. tRNA 3'-terminal CCA addition is required both for tRNA processing and repair. Also involved in tRNA surveillance by mediating tandem CCA addition to generate a CCACCA at the 3' terminus of unstable tRNAs. While stable tRNAs receive only 3'-terminal CCA, unstable tRNAs are marked with CCACCA and rapidly degraded. The sequence is that of CCA-adding enzyme from Staphylococcus aureus (strain MRSA252).